The chain runs to 294 residues: 4-hydroxy-tetrahydrodipicolinate synthase (294 aa).

Thr48 is a binding site for pyruvate. The active-site Proton donor/acceptor is Tyr136. Residue Lys164 is the Schiff-base intermediate with substrate of the active site. Val206 contacts pyruvate.

Belongs to the DapA family. In terms of assembly, homotetramer; dimer of dimers.

It localises to the cytoplasm. It catalyses the reaction L-aspartate 4-semialdehyde + pyruvate = (2S,4S)-4-hydroxy-2,3,4,5-tetrahydrodipicolinate + H2O + H(+). The protein operates within amino-acid biosynthesis; L-lysine biosynthesis via DAP pathway; (S)-tetrahydrodipicolinate from L-aspartate: step 3/4. Its function is as follows. Catalyzes the condensation of (S)-aspartate-beta-semialdehyde [(S)-ASA] and pyruvate to 4-hydroxy-tetrahydrodipicolinate (HTPA). This chain is 4-hydroxy-tetrahydrodipicolinate synthase, found in Desulforudis audaxviator (strain MP104C).